The sequence spans 432 residues: Short transient receptor potential channel 2 homolog (432 aa).

A run of 4 helical transmembrane segments spans residues 1 to 21 (MVIL…AGLA), 52 to 72 (FLAE…LASI), 96 to 116 (FMFI…NIYV), and 162 to 182 (LYGI…IAMI). The interval 356–432 (QNLGPPIPET…EADLGAKEGT (77 aa)) is disordered. The span at 387 to 404 (AGGAQAPASGESGPSSPA) shows a compositional bias: low complexity.

The protein belongs to the transient receptor (TC 1.A.4) family. STrpC subfamily. TRPC2 sub-subfamily.

It localises to the membrane. Thought to form a receptor-activated calcium permeant cation channel. The polypeptide is Short transient receptor potential channel 2 homolog (TRPC2) (Bos taurus (Bovine)).